A 263-amino-acid polypeptide reads, in one-letter code: ATP synthase subunit a (263 aa).

A propeptide spans 1 to 14 (MYLNNNNNMKYYIN) (removed in mature form). The next 6 helical transmembrane spans lie at 35–57 (FSFI…ILTM), 95–117 (VWGY…NLIS), 129–151 (VVFV…FYTH), 156–178 (FGLF…IELL), 191–213 (LSAN…FNLM), and 228–250 (IAIL…VWCI).

It belongs to the ATPase A chain family. As to quaternary structure, F-type ATPases have 2 components, CF(1) - the catalytic core - and CF(0) - the membrane proton channel. In yeast, the dimeric form of ATP synthase consists of 18 polypeptides: alpha, beta, gamma, delta, epsilon, 4 (B), 5 (OSCP), 6 (A), 8, 9 (C), d, E (Tim11), f, g, h, i, j and k.

Its subcellular location is the mitochondrion inner membrane. Mitochondrial membrane ATP synthase (F(1)F(0) ATP synthase or Complex V) produces ATP from ADP in the presence of a proton gradient across the membrane which is generated by electron transport complexes of the respiratory chain. F-type ATPases consist of two structural domains, F(1) - containing the extramembraneous catalytic core and F(0) - containing the membrane proton channel, linked together by a central stalk and a peripheral stalk. During catalysis, ATP synthesis in the catalytic domain of F(1) is coupled via a rotary mechanism of the central stalk subunits to proton translocation. Key component of the proton channel; it may play a direct role in the translocation of protons across the membrane. The polypeptide is ATP synthase subunit a (ATP6) (Eremothecium gossypii (strain ATCC 10895 / CBS 109.51 / FGSC 9923 / NRRL Y-1056) (Yeast)).